Here is a 476-residue protein sequence, read N- to C-terminus: UDP-N-acetylmuramate--L-alanine ligase (476 aa).

Residue 107 to 113 (GTHGKTT) participates in ATP binding.

The protein belongs to the MurCDEF family.

The protein localises to the cytoplasm. The enzyme catalyses UDP-N-acetyl-alpha-D-muramate + L-alanine + ATP = UDP-N-acetyl-alpha-D-muramoyl-L-alanine + ADP + phosphate + H(+). The protein operates within cell wall biogenesis; peptidoglycan biosynthesis. In terms of biological role, cell wall formation. The chain is UDP-N-acetylmuramate--L-alanine ligase from Roseiflexus castenholzii (strain DSM 13941 / HLO8).